The sequence spans 178 residues: Adenine phosphoribosyltransferase (178 aa).

The protein belongs to the purine/pyrimidine phosphoribosyltransferase family. In terms of assembly, homodimer.

The protein resides in the cytoplasm. The catalysed reaction is AMP + diphosphate = 5-phospho-alpha-D-ribose 1-diphosphate + adenine. Its pathway is purine metabolism; AMP biosynthesis via salvage pathway; AMP from adenine: step 1/1. In terms of biological role, catalyzes a salvage reaction resulting in the formation of AMP, that is energically less costly than de novo synthesis. The protein is Adenine phosphoribosyltransferase of Bacteroides fragilis (strain YCH46).